Here is a 794-residue protein sequence, read N- to C-terminus: Signal transducer and activator of transcription 5A (794 aa).

Phosphotyrosine is present on Y90. Residue S129 is modified to Phosphoserine. Residues 589–686 (WNDGAILGFV…EVFSKYYTPV (98 aa)) form the SH2 domain. The residue at position 682 (Y682) is a Phosphotyrosine. The residue at position 694 (Y694) is a Phosphotyrosine; by JAK2. The disordered stretch occupies residues 765–794 (EELLRRPNGQSGPLSPPPAGLFTPARGSLS).

This sequence belongs to the transcription factor STAT family. Forms a homodimer or a heterodimer with a related family member. Binds NR3C1. Interacts with NCOA1 and SOCS7. Interacts with ERBB4. Interacts with EBF4. Interacts with CD69. In terms of processing, ISGylated. Tyrosine phosphorylated in response to KITLG/SCF, IL2, IL3, IL7, IL15, CSF2/GMCSF, GH1, PRL, EPO and THPO. Activated KIT promotes phosphorylation on tyrosine residues and subsequent translocation to the nucleus. Tyrosine phosphorylated in response to constitutively activated FGFR1, FGFR2, FGFR3 and FGFR4. Tyrosine phosphorylation is required for DNA-binding activity and dimerization. Serine phosphorylation is also required for maximal transcriptional activity. Tyrosine phosphorylated in response to signaling via activated FLT3; wild-type FLT3 results in much weaker phosphorylation than constitutively activated mutant FLT3. Alternatively, can be phosphorylated by JAK2 at Tyr-694. In terms of tissue distribution, found in mammary gland and, in lesser extent, in ovary, thymus, spleen, kidney, lung, muscle and adrenal gland.

The protein resides in the cytoplasm. Its subcellular location is the nucleus. Carries out a dual function: signal transduction and activation of transcription. Mediates cellular responses to the cytokine KITLG/SCF and other growth factors. May mediate cellular responses to activated FGFR1, FGFR2, FGFR3 and FGFR4. Binds to the GAS element and activates PRL-induced transcription. Regulates the expression of milk proteins during lactation. The protein is Signal transducer and activator of transcription 5A (STAT5A) of Ovis aries (Sheep).